Consider the following 357-residue polypeptide: DNA replication and repair protein RecF (357 aa).

31–38 contributes to the ATP binding site; sequence GQNGAGKT.

It belongs to the RecF family.

The protein localises to the cytoplasm. Its function is as follows. The RecF protein is involved in DNA metabolism; it is required for DNA replication and normal SOS inducibility. RecF binds preferentially to single-stranded, linear DNA. It also seems to bind ATP. This Coxiella burnetii (strain Dugway 5J108-111) protein is DNA replication and repair protein RecF.